The sequence spans 463 residues: Type II NADH:quinone oxidoreductase Ndh (463 aa).

Residues 21-25 (GSGFG) and Val89 contribute to the FAD site. Glu184 is an active-site residue. Residues Asp322 and 333–334 (AQ) contribute to the FAD site. The helical transmembrane segment at 387–407 (FSGFIAWLIWLVLHLAYLIGF) threads the bilayer.

Belongs to the NADH dehydrogenase family. It depends on FAD as a cofactor.

Its subcellular location is the cell inner membrane. It catalyses the reaction a quinone + NADH + H(+) = a quinol + NAD(+). The catalysed reaction is a menaquinone + NADH + H(+) = a menaquinol + NAD(+). It carries out the reaction a ubiquinone + NADH + H(+) = a ubiquinol + NAD(+). With respect to regulation, inhibited by phenothiazine analogs. Inhibited by 2-mercapto-quinazolinones. Not inhibited by classic inhibitors of type I NADH dehydrogenase, such as rotenone, piericidin A and pyridaben. In terms of biological role, alternative, nonproton pumping NADH:quinone oxidoreductase that delivers electrons to the respiratory chain by oxidation of NADH and reduction of quinones. Ndh is probably the main NADH dehydrogenase of M.tuberculosis. This chain is Type II NADH:quinone oxidoreductase Ndh, found in Mycobacterium tuberculosis (strain ATCC 25618 / H37Rv).